The chain runs to 119 residues: MSTTRGVSSSSAAAALALLLLFALCFFSFHFAAAARAVPRDEHQENGGVKAVAAVAADQLVLQLEGDTGNGDEVSELMGAAEEEAAACEEGKNNDECVQRRLLSDAHLDYIYTQHKNKP.

Residues Met1 to Ala34 form the signal peptide. Residues Ala35–Asp109 constitute a propeptide that is removed on maturation. Sulfotyrosine is present on residues Tyr110 and Tyr112. Positions His115–Pro119 are excised as a propeptide.

Belongs to the phytosulfokine family. In terms of processing, sulfation is important for activity and for the binding to a putative membrane receptor. PSK-alpha is produced by endopeptidase digestion. PSK-beta is produced from PSK-alpha by exopeptidase digestion.

Its subcellular location is the secreted. Promotes plant cell differentiation, organogenesis and somatic embryogenesis as well as cell proliferation. The chain is Phytosulfokines 2 (PSK2) from Oryza sativa subsp. japonica (Rice).